Consider the following 257-residue polypeptide: AN1-type zinc finger protein 2B (257 aa).

AN1-type zinc fingers lie at residues 4 to 52 (PDLG…QKDI) and 94 to 142 (KIFT…HPTS). Zn(2+)-binding residues include Cys-10, Cys-15, Cys-25, Cys-28, Cys-33, His-36, His-42, Cys-44, Cys-100, Cys-105, Cys-115, Cys-118, Cys-123, His-126, His-132, and Cys-134. The interval 141-151 (TSRAGLAAISR) is VCP/p97-interacting motif (VIM). The tract at residues 153-187 (QAVASTSTVPSPSQTMPSCTSPSRATTRSPSWTAP) is disordered. Residues 155–171 (VASTSTVPSPSQTMPSC) show a composition bias toward polar residues. A phosphoserine mark is found at Ser-163 and Ser-173. Positions 172 to 186 (TSPSRATTRSPSWTA) are enriched in low complexity. 2 consecutive UIM domains span residues 197 to 216 (SEDE…TKPQ) and 221 to 240 (QEEE…AEYQ). Cys-254 is modified (cysteine methyl ester). Cys-254 carries S-geranylgeranyl cysteine lipidation. The short motif at 254–257 (CSLC) is the CAAX motif element. A propeptide spans 255-257 (SLC) (removed in mature form).

In terms of assembly, binds 'Lys-48'-linked polyubiquitin chains of ubiquitinated proteins. Associates with the proteasome complex; upon exposure to arsenite. Interacts (via VIM motif) with VCP; the interaction is direct. Interacts with BAG6. Interacts with IGF1R (nascent precursor form). Interacts with DERL1, FAF2, NPLOC4 and UFD1; probably through VCP. In terms of processing, phosphorylated by MAPK14. Phosphorylation has no effect on association with the proteasome complex.

It is found in the endoplasmic reticulum membrane. Its function is as follows. Plays a role in protein homeostasis by regulating both the translocation and the ubiquitin-mediated proteasomal degradation of nascent proteins at the endoplasmic reticulum. It is involved in the regulation of signal-mediated translocation of proteins into the endoplasmic reticulum. It also plays a role in the ubiquitin-mediated proteasomal degradation of proteins for which signal-mediated translocation to the endoplasmic reticulum has failed. May therefore function in the endoplasmic reticulum stress-induced pre-emptive quality control, a mechanism that selectively attenuates the translocation of newly synthesized proteins into the endoplasmic reticulum and reroutes them to the cytosol for proteasomal degradation. By controlling the steady-state expression of the IGF1R receptor, indirectly regulates the insulin-like growth factor receptor signaling pathway. This Homo sapiens (Human) protein is AN1-type zinc finger protein 2B.